Consider the following 361-residue polypeptide: Nicotinate-nucleotide--dimethylbenzimidazole phosphoribosyltransferase (361 aa).

The active-site Proton acceptor is Glu314.

This sequence belongs to the CobT family.

The catalysed reaction is 5,6-dimethylbenzimidazole + nicotinate beta-D-ribonucleotide = alpha-ribazole 5'-phosphate + nicotinate + H(+). Its pathway is nucleoside biosynthesis; alpha-ribazole biosynthesis; alpha-ribazole from 5,6-dimethylbenzimidazole: step 1/2. Functionally, catalyzes the synthesis of alpha-ribazole-5'-phosphate from nicotinate mononucleotide (NAMN) and 5,6-dimethylbenzimidazole (DMB). The polypeptide is Nicotinate-nucleotide--dimethylbenzimidazole phosphoribosyltransferase (Mycobacterium bovis (strain BCG / Pasteur 1173P2)).